The primary structure comprises 130 residues: Large ribosomal subunit protein bL20c (130 aa).

This sequence belongs to the bacterial ribosomal protein bL20 family.

It localises to the plastid. Its subcellular location is the chloroplast. Its function is as follows. Binds directly to 23S ribosomal RNA and is necessary for the in vitro assembly process of the 50S ribosomal subunit. It is not involved in the protein synthesizing functions of that subunit. This Oenothera argillicola (Appalachian evening primrose) protein is Large ribosomal subunit protein bL20c.